Consider the following 694-residue polypeptide: 4-alpha-glucanotransferase (694 aa).

It belongs to the disproportionating enzyme family.

It is found in the cytoplasm. It carries out the reaction Transfers a segment of a (1-&gt;4)-alpha-D-glucan to a new position in an acceptor, which may be glucose or a (1-&gt;4)-alpha-D-glucan.. The protein is 4-alpha-glucanotransferase (malQ) of Escherichia coli (strain K12).